We begin with the raw amino-acid sequence, 259 residues long: Probable ABC transporter arginine-binding protein ArtJ (259 aa).

The first 25 residues, 1–25 (MIKQIGRFFRAFIFIMPLSLTSCES), serve as a signal peptide directing secretion. Asn-38, Glu-45, Ala-96, Gly-97, Ser-99, Arg-104, and Phe-149 together coordinate L-arginine.

The protein belongs to the bacterial solute-binding protein 3 family.

It is found in the secreted. Its subcellular location is the cell surface. Its function is as follows. Probably part of an ABC transporter complex involved in arginine transport. Binds arginine. Interacts with host epithelial cells, suggesting a role in host-cell adhesion during infection. The chain is Probable ABC transporter arginine-binding protein ArtJ from Chlamydia pneumoniae (Chlamydophila pneumoniae).